Here is a 408-residue protein sequence, read N- to C-terminus: Histidine--tRNA ligase (408 aa).

This sequence belongs to the class-II aminoacyl-tRNA synthetase family. Homodimer.

Its subcellular location is the cytoplasm. The catalysed reaction is tRNA(His) + L-histidine + ATP = L-histidyl-tRNA(His) + AMP + diphosphate + H(+). This Campylobacter jejuni subsp. jejuni serotype O:23/36 (strain 81-176) protein is Histidine--tRNA ligase.